A 420-amino-acid polypeptide reads, in one-letter code: MLKAVILIGGPQKGTRFRPLSFEVPKPLFPVAGVPMIQHHIEACAQVPGMQEILLIGFYQPDEPLTRFLEAAQQEFNLPIRYLQEFAPLGTGGGLYHFRDQILAGGPEAFFVLNADVCSDFPLSAMLDAHRHRPHPFLLLGTTANRTQSLNYGCIVENPQTHEVLHYVEKPSTFVSDIINCGIYLFSPETLKPLGKFFQRYQQGGQLEDSSVLWPGAGTIRLEQDVFAALAGQGQIYVHLTDGIWSQIKSAGSALYASRLYLSQYQLTHPERLAKHTPGGPRIRGNVYIHPTAKVAPSAVLGPNVSIGEGVTVGEGVRLRESIVLHGATLQEHTCVLHSIVGWGSTVGRWARVEGTPNDPNPNDPRAHMDSESLFKDGKLLPAITILGCRVRIPAEVLILNSIVLPHKELSRSFTNQIIL.

Residues Leu-2–Ala-251 form a substrate-binding domain region. Residues Glu-85 and Gln-247 each contribute to the GDP-alpha-D-mannose site. Residues Leu-273–Leu-420 form a hexapeptide repeat domain region. A C-loop region spans residues Thr-356–Ile-384.

This sequence belongs to the transferase hexapeptide repeat family. As to quaternary structure, component of the GMPPA-GMPPB mannose-1-phosphate guanylyltransferase complex composed of 4 GMPPA subunits and 8 GMPPB subunits; the complex is organized into three layers, a central layer made up of 2 GMPPA dimers sandwiched between two layers each made up of 2 GMPPB dimers. Expressed in the liver (at protein level).

It is found in the cytoplasm. In terms of biological role, regulatory subunit of the GMPPA-GMPPB mannose-1-phosphate guanylyltransferase complex; reduces the catalytic activity of GMPPB when part of the complex. Mediates allosteric feedback inhibition of GMPPB catalytic activity upon binding GDP-alpha-D-mannose. Together with GMPPB regulates GDP-alpha-D-mannose levels. The chain is Mannose-1-phosphate guanylyltransferase regulatory subunit alpha (GMPPA) from Sus scrofa (Pig).